Consider the following 191-residue polypeptide: Fe/S biogenesis protein NfuA (191 aa).

Residues cysteine 149 and cysteine 152 each coordinate [4Fe-4S] cluster.

Belongs to the NfuA family. As to quaternary structure, homodimer. [4Fe-4S] cluster is required as a cofactor.

Its function is as follows. Involved in iron-sulfur cluster biogenesis. Binds a 4Fe-4S cluster, can transfer this cluster to apoproteins, and thereby intervenes in the maturation of Fe/S proteins. Could also act as a scaffold/chaperone for damaged Fe/S proteins. This chain is Fe/S biogenesis protein NfuA, found in Serratia proteamaculans (strain 568).